A 178-amino-acid chain; its full sequence is MATPMHRLIARRKAEANKQHVRCQKCLEFGHWTYECKGKRKYLHRPSRTAELKKALKEKENRLLLQSIGETNIEKKIKKKKRSKSVTSSSTSSSDSSASESSSESETSASSSSEDSDSDESLSSSSSSSSSSACSSSSSSSSSSSSSDSDSSSSSSSSSSSSESSSDDEPQKKKKKKK.

The segment at 21–38 (VRCQKCLEFGHWTYECKG) adopts a CCHC-type zinc-finger fold. The segment at 66–178 (QSIGETNIEK…EPQKKKKKKK (113 aa)) is disordered. 2 stretches are compositionally biased toward low complexity: residues 85–113 (SVTS…SSSS) and 121–164 (SLSS…SSES).

The chain is Zinc finger CCHC domain-containing protein 10 (Zcchc10) from Mus musculus (Mouse).